Consider the following 421-residue polypeptide: ATP phosphoribosyltransferase regulatory subunit (421 aa).

Belongs to the class-II aminoacyl-tRNA synthetase family. HisZ subfamily. Heteromultimer composed of HisG and HisZ subunits.

It localises to the cytoplasm. It functions in the pathway amino-acid biosynthesis; L-histidine biosynthesis; L-histidine from 5-phospho-alpha-D-ribose 1-diphosphate: step 1/9. In terms of biological role, required for the first step of histidine biosynthesis. May allow the feedback regulation of ATP phosphoribosyltransferase activity by histidine. In Clostridium novyi (strain NT), this protein is ATP phosphoribosyltransferase regulatory subunit.